The following is a 376-amino-acid chain: MDIYKFAVRPLLFDLVKADPEWLHQQTMRSLSWLSHTSDRTSTKWVQNILQKSLCLEDSRLEQNLFGLRFPNPVGLAAGFDKDGVAARIWSSLGFGFAELGTVTFVGQPGNPPPRLFRLPLDQAALNRMGFNNHGAAVMAARLADEKGQFSIPIGINLGKSKVTPLEAAAEDYLNSFRLLKELGDYFVVNVSSPNTPGLRSLQDASMLSSILDVLQKENNSHKPIFVKIAPDLEWEAIADIIGLAKTYQLAGIIATNTTIRRDGLKTQVIEQTGKAPQEEAGGISGAPVRDRSTEIIRFIWQQTQGEIPIIGVGGIFTPEDAWAKITAGASLIQVYTGWIYQGPMMVSQILTGLLSKLEEHELNSISEAIGLEFKS.

Residues 78–82 and Thr102 contribute to the FMN site; that span reads AGFDK. A substrate-binding site is contributed by Lys82. 127–131 contributes to the substrate binding site; the sequence is NRMGF. FMN is bound by residues Asn157 and Asn190. Asn190 provides a ligand contact to substrate. The active-site Nucleophile is Ser193. Asn195 lines the substrate pocket. Positions 228 and 256 each coordinate FMN. Position 257 to 258 (257 to 258) interacts with substrate; it reads NT. FMN-binding positions include Gly286, Gly315, and 336-337; that span reads YT.

Belongs to the dihydroorotate dehydrogenase family. Type 2 subfamily. In terms of assembly, monomer. The cofactor is FMN.

The protein resides in the cell membrane. The catalysed reaction is (S)-dihydroorotate + a quinone = orotate + a quinol. The protein operates within pyrimidine metabolism; UMP biosynthesis via de novo pathway; orotate from (S)-dihydroorotate (quinone route): step 1/1. Its function is as follows. Catalyzes the conversion of dihydroorotate to orotate with quinone as electron acceptor. The polypeptide is Dihydroorotate dehydrogenase (quinone) (Nostoc sp. (strain PCC 7120 / SAG 25.82 / UTEX 2576)).